The chain runs to 109 residues: Protein reprimo (109 aa).

Residues Asn-7 and Asn-18 are each glycosylated (N-linked (GlcNAc...) asparagine). A helical transmembrane segment spans residues 56–76 (VVQIAVMCVLSLTVVFGIFFL). Phosphoserine is present on Ser-98.

This sequence belongs to the reprimo family.

Its subcellular location is the cytoplasm. It localises to the membrane. In terms of biological role, may be involved in the regulation of p53-dependent G2 arrest of the cell cycle. Seems to induce cell cycle arrest by inhibiting CDK1 activity and nuclear translocation of the CDC2 cyclin B1 complex. This chain is Protein reprimo (Rprm), found in Mus musculus (Mouse).